Here is a 721-residue protein sequence, read N- to C-terminus: BBSome complex member bbs-7 (721 aa).

In terms of assembly, part of BBSome complex, that contains at least bbs-1, bbs-2, bbs-4, bbs-5, osm-12, bbs-8/ttc-8 and bbs-9. Interacts with bbs-1. Expressed in ciliated cells including amphid and both inner and outer labial neurons of the head and in both phasmid neurons PHA and PHB in the tail at larval stages L1 and L2.

Its subcellular location is the cell projection. It localises to the cilium. The protein resides in the cytoplasm. It is found in the cytoskeleton. The protein localises to the cilium basal body. Its subcellular location is the cilium axoneme. Its function is as follows. Component of the BBSome complex. The BBSome complex is thought to function as a coat complex required for sorting of specific membrane proteins to the primary cilia. The BBSome complex is required for ciliogenesis but is dispensable for centriolar satellite function. Required for proper BBSome complex assembly and its ciliary localization. Required for cilia biogenesis and both the assembly and movement of intraflagellar transport proteins along the ciliary axoneme. Plays a role in the removal of degraded mechanosensory receptors within the cilia. Plays a role in guanylyl cyclase localization in the ring-like structures at the base of the finger compartment in AFD sensory neurons. In ciliated sensory neurons, required for the sensation of nitric oxide and avoidance of NO-producing organisms like P.aeruginosa. The protein is BBSome complex member bbs-7 of Caenorhabditis elegans.